The sequence spans 253 residues: Imidazole glycerol phosphate synthase subunit HisF (253 aa).

Residues aspartate 11 and aspartate 130 contribute to the active site.

The protein belongs to the HisA/HisF family. As to quaternary structure, heterodimer of HisH and HisF.

The protein localises to the cytoplasm. It carries out the reaction 5-[(5-phospho-1-deoxy-D-ribulos-1-ylimino)methylamino]-1-(5-phospho-beta-D-ribosyl)imidazole-4-carboxamide + L-glutamine = D-erythro-1-(imidazol-4-yl)glycerol 3-phosphate + 5-amino-1-(5-phospho-beta-D-ribosyl)imidazole-4-carboxamide + L-glutamate + H(+). Its pathway is amino-acid biosynthesis; L-histidine biosynthesis; L-histidine from 5-phospho-alpha-D-ribose 1-diphosphate: step 5/9. IGPS catalyzes the conversion of PRFAR and glutamine to IGP, AICAR and glutamate. The HisF subunit catalyzes the cyclization activity that produces IGP and AICAR from PRFAR using the ammonia provided by the HisH subunit. The sequence is that of Imidazole glycerol phosphate synthase subunit HisF from Gluconobacter oxydans (strain 621H) (Gluconobacter suboxydans).